We begin with the raw amino-acid sequence, 135 residues long: Large ribosomal subunit protein uL16c (135 aa).

It belongs to the universal ribosomal protein uL16 family. As to quaternary structure, part of the 50S ribosomal subunit.

The protein localises to the plastid. The protein is Large ribosomal subunit protein uL16c of Epifagus virginiana (Beechdrops).